Here is a 150-residue protein sequence, read N- to C-terminus: Large ribosomal subunit protein bL9 (150 aa).

This sequence belongs to the bacterial ribosomal protein bL9 family.

Binds to the 23S rRNA. This chain is Large ribosomal subunit protein bL9, found in Latilactobacillus sakei subsp. sakei (strain 23K) (Lactobacillus sakei subsp. sakei).